The primary structure comprises 311 residues: Aspartate carbamoyltransferase catalytic subunit (311 aa).

2 residues coordinate carbamoyl phosphate: Arg-58 and Thr-59. Lys-86 provides a ligand contact to L-aspartate. Positions 108, 136, and 139 each coordinate carbamoyl phosphate. Residues Arg-169 and Arg-223 each coordinate L-aspartate. Carbamoyl phosphate-binding residues include Gly-264 and Pro-265.

The protein belongs to the aspartate/ornithine carbamoyltransferase superfamily. ATCase family. Heterododecamer (2C3:3R2) of six catalytic PyrB chains organized as two trimers (C3), and six regulatory PyrI chains organized as three dimers (R2).

The catalysed reaction is carbamoyl phosphate + L-aspartate = N-carbamoyl-L-aspartate + phosphate + H(+). It participates in pyrimidine metabolism; UMP biosynthesis via de novo pathway; (S)-dihydroorotate from bicarbonate: step 2/3. Functionally, catalyzes the condensation of carbamoyl phosphate and aspartate to form carbamoyl aspartate and inorganic phosphate, the committed step in the de novo pyrimidine nucleotide biosynthesis pathway. In Acidiphilium cryptum (strain JF-5), this protein is Aspartate carbamoyltransferase catalytic subunit.